Here is a 79-residue protein sequence, read N- to C-terminus: D-alanyl carrier protein (79 aa).

Residues 1–77 (MDIKSEVLKI…KIIEGITELR (77 aa)) enclose the Carrier domain. Serine 35 carries the O-(pantetheine 4'-phosphoryl)serine modification.

It belongs to the DltC family. In terms of processing, 4'-phosphopantetheine is transferred from CoA to a specific serine of apo-DCP.

It localises to the cytoplasm. It functions in the pathway cell wall biogenesis; lipoteichoic acid biosynthesis. In terms of biological role, carrier protein involved in the D-alanylation of lipoteichoic acid (LTA). The loading of thioester-linked D-alanine onto DltC is catalyzed by D-alanine--D-alanyl carrier protein ligase DltA. The DltC-carried D-alanyl group is further transferred to cell membrane phosphatidylglycerol (PG) by forming an ester bond, probably catalyzed by DltD. D-alanylation of LTA plays an important role in modulating the properties of the cell wall in Gram-positive bacteria, influencing the net charge of the cell wall. The protein is D-alanyl carrier protein of Streptococcus mutans serotype c (strain ATCC 700610 / UA159).